We begin with the raw amino-acid sequence, 132 residues long: SH2 domain-containing protein 1B2 (132 aa).

The 97-residue stretch at 5-101 folds into the SH2 domain; that stretch reads YYHGCLTKRE…GMVVHLSNPI (97 aa).

As to quaternary structure, interacts with SLAMF1 (phosphorylated). Interacts with CD244. Interacts with Src kinases HCK, LYN, FYN, FGR and LCK (via kinase domains). In terms of tissue distribution, expressed in spleen. Expressed in macrophages, CD8(+) T-Cells and NK cells. Conflictingly found only in NK cells.

The protein localises to the cytoplasm. Functionally, cytoplasmic adapter regulating receptors of the signaling lymphocytic activation molecule (SLAM) family. In SLAM signaling may cooperate with Sh2d1a/SAP. Plays a role in regulation of effector functions of natural killer (NK) cells by controlling signal transduction through Cd244/2b4. However, conflicting results are reported which may reflect the use of different strain backgrounds. Proposed to act as an inhibitor of Cd244-mediated NK cell function including cytotoxicity and IFN-gamma production, the latter found also by triggering Klra4 and Klrk1 next to Cd244. Seems to positively regulate Cd244- and Cd84-dependent NK cell functions implicating Cd244-mediated phosphorylation of Vav1. The chain is SH2 domain-containing protein 1B2 (Sh2d1b2) from Mus musculus (Mouse).